The primary structure comprises 434 residues: Tungsten-containing formylmethanofuran dehydrogenase 2 subunit B (434 aa).

A non-standard amino acid (selenocysteine) is located at residue U120.

This sequence belongs to the FwdB family. As to quaternary structure, this enzyme is composed of six subunits FwdA, FwdC, FwdD, FwdE, FwdF and FwdG. Requires W-bis(molybdopterin guanine dinucleotide) as cofactor.

The enzyme catalyses N-formylmethanofuran + 2 oxidized [2Fe-2S]-[ferredoxin] + H2O = methanofuran + 2 reduced [2Fe-2S]-[ferredoxin] + CO2 + H(+). It functions in the pathway one-carbon metabolism; methanogenesis from CO(2); 5,10-methenyl-5,6,7,8-tetrahydromethanopterin from CO(2): step 1/3. Catalyzes the reversible oxidation of CO(2) and methanofuran (MFR) to N-formylmethanofuran (CHO-MFR). This enzyme is oxygen-labile. The protein is Tungsten-containing formylmethanofuran dehydrogenase 2 subunit B (fwdB) of Methanococcus maripaludis (strain DSM 14266 / JCM 13030 / NBRC 101832 / S2 / LL).